We begin with the raw amino-acid sequence, 277 residues long: MATFFGEVLSVYSRAVEEDEYEDMTNENEEDEQIRREIEEKRSVEVCWLLGSQDGPLQCSDLIIGAGPNASGFIRAYLLSTVGWTAVAWLSFWNERSRGSERPTVVPGPGEPSCVLYRLESCPTVLICQCQGFVAEDQLFQFTEKVFSCVQTRDLNVTILSDCSSADYKTSDYLSGSSTPFLRCLKTSTYTHTVTCPPLEQPNICSGLAAAVLSHCQVHQISAVLYQCYSDVLHPDSASMQMFAATLSSVLKLEQSLSADVLQRVTRVSEIQSNLYT.

It belongs to the PSMG1 family. In terms of assembly, forms a heterodimer with psmg2. Post-translationally, degraded by the proteasome upon completion of 20S proteasome maturation.

It localises to the cytoplasm. The protein localises to the endoplasmic reticulum. Its function is as follows. Chaperone protein which promotes assembly of the 20S proteasome as part of a heterodimer with psmg2. This chain is Proteasome assembly chaperone 1, found in Danio rerio (Zebrafish).